The primary structure comprises 802 residues: Leucine--tRNA ligase (802 aa).

The 'HIGH' region signature appears at 40 to 51; it reads PYPSGAGLHVGH. The short motif at 576–580 is the 'KMSKS' region element; sequence KMSKS. Lysine 579 is an ATP binding site.

Belongs to the class-I aminoacyl-tRNA synthetase family.

It is found in the cytoplasm. It catalyses the reaction tRNA(Leu) + L-leucine + ATP = L-leucyl-tRNA(Leu) + AMP + diphosphate. In Bacillus cereus (strain ATCC 10987 / NRS 248), this protein is Leucine--tRNA ligase.